Consider the following 62-residue polypeptide: Conotoxin Sr5.7 (62 aa).

An N-terminal signal peptide occupies residues 1–22 (MRCLPVFVILLLLIASAPSVDA). A propeptide spanning residues 23–44 (QLKTKDDVPLASFHDNAKGTQH) is cleaved from the precursor.

The protein belongs to the conotoxin T superfamily. Post-translationally, contains 2 disulfide bonds that can be either 'C1-C3, C2-C4' or 'C1-C4, C2-C3', since these disulfide connectivities have been observed for conotoxins with cysteine framework V (for examples, see AC P0DQQ7 and AC P81755). As to expression, expressed by the venom duct.

The protein resides in the secreted. The polypeptide is Conotoxin Sr5.7 (Conus spurius (Alphabet cone)).